The following is a 541-amino-acid chain: Copper transport protein CutJ (541 aa).

The first 25 residues, 1–25 (MKRNRWWIILLLFLVFLPKTSFAHA), serve as a signal peptide directing secretion. Residues His-24 and His-110 each coordinate Cu cation. 8 helical membrane passes run 146–166 (AILYTALSLFIGTVFFHLFWY), 180–200 (ILTGSIAALGLALLLQLPIQT), 228–248 (SIWIIQAALFVLLALSVIPAI), 262–282 (PLIFFFGLLLAKAFTGHAAVV), 293–313 (FLHLTSASIWVGGIAALVLLL), 335–355 (WALTAVGVILFSGLLNGFFII), 370–390 (LLVKSGLFVFMLVLGAIHFLL), and 407–427 (WAIGIAVLITAAVFTSLPSPP).

In the N-terminal section; belongs to the CopC family. It in the C-terminal section; belongs to the CopD family.

The protein resides in the cell membrane. Its function is as follows. Involved in uptake of extracellular oxidized copper under copper-limiting conditions. This chain is Copper transport protein CutJ, found in Bacillus subtilis (strain 168).